The primary structure comprises 540 residues: Phosphomethylpyrimidine synthase (540 aa).

Substrate is bound by residues N143, M172, Y201, H237, 257-259 (SRG), 298-301 (DGLR), and E337. Position 341 (H341) interacts with Zn(2+). Residue Y364 participates in substrate binding. H405 contacts Zn(2+). C485, C488, and C493 together coordinate [4Fe-4S] cluster.

Belongs to the ThiC family. [4Fe-4S] cluster is required as a cofactor.

It carries out the reaction 5-amino-1-(5-phospho-beta-D-ribosyl)imidazole + S-adenosyl-L-methionine = 4-amino-2-methyl-5-(phosphooxymethyl)pyrimidine + CO + 5'-deoxyadenosine + formate + L-methionine + 3 H(+). Its pathway is cofactor biosynthesis; thiamine diphosphate biosynthesis. Functionally, catalyzes the synthesis of the hydroxymethylpyrimidine phosphate (HMP-P) moiety of thiamine from aminoimidazole ribotide (AIR) in a radical S-adenosyl-L-methionine (SAM)-dependent reaction. The chain is Phosphomethylpyrimidine synthase from Mycobacterium avium (strain 104).